We begin with the raw amino-acid sequence, 639 residues long: Testicular spindle-associated protein SHCBP1L (639 aa).

2 disordered regions span residues 1–25 and 48–75; these read MESD…EQTV and VASP…ETCD. An O-acetylserine modification is found at S3. Phosphoserine occurs at positions 8, 19, and 50. A compositionally biased stretch (basic residues) spans 54–63; it reads VKGKAARRRL. Residues 285 to 312 adopt a coiled-coil conformation; the sequence is IAQRFKKTLEKYKNKRVELIEYQSNIKE. 4 PbH1 repeats span residues 479–500, 501–523, 524–557, and 560–582; these read SGHL…CVLT, GASL…ELYP, GSIA…NMKV, and APKL…SILQ. The residue at position 556 (K556) is an N6-acetyllysine. Residue K631 is modified to N6-acetyllysine.

As to quaternary structure, interacts with HSPA2; this interaction may promote the recruitment of HSPA2 to the spindle. Expressed in pachytene spermatocytes and elongating spermatids inside the seminiferous tubules. Not detected in ovary (at protein level). Testis-specific.

It localises to the cytoplasm. It is found in the cytoskeleton. The protein localises to the spindle. Testis-specific spindle-associated factor that plays a role in spermatogenesis. In association with HSPA2, participates in the maintenance of spindle integrity during meiosis in male germ cells. In Mus musculus (Mouse), this protein is Testicular spindle-associated protein SHCBP1L.